The following is a 276-amino-acid chain: Ribosomal RNA small subunit methyltransferase A (276 aa).

6 residues coordinate S-adenosyl-L-methionine: N16, L18, G43, E64, D89, and N109.

This sequence belongs to the class I-like SAM-binding methyltransferase superfamily. rRNA adenine N(6)-methyltransferase family. RsmA subfamily.

The protein resides in the cytoplasm. The enzyme catalyses adenosine(1518)/adenosine(1519) in 16S rRNA + 4 S-adenosyl-L-methionine = N(6)-dimethyladenosine(1518)/N(6)-dimethyladenosine(1519) in 16S rRNA + 4 S-adenosyl-L-homocysteine + 4 H(+). In terms of biological role, specifically dimethylates two adjacent adenosines (A1518 and A1519) in the loop of a conserved hairpin near the 3'-end of 16S rRNA in the 30S particle. May play a critical role in biogenesis of 30S subunits. The polypeptide is Ribosomal RNA small subunit methyltransferase A (Marinobacter nauticus (strain ATCC 700491 / DSM 11845 / VT8) (Marinobacter aquaeolei)).